Consider the following 152-residue polypeptide: Ribosome maturation factor RimP (152 aa).

This sequence belongs to the RimP family.

Its subcellular location is the cytoplasm. In terms of biological role, required for maturation of 30S ribosomal subunits. This is Ribosome maturation factor RimP from Aeromonas hydrophila subsp. hydrophila (strain ATCC 7966 / DSM 30187 / BCRC 13018 / CCUG 14551 / JCM 1027 / KCTC 2358 / NCIMB 9240 / NCTC 8049).